A 790-amino-acid polypeptide reads, in one-letter code: Choline transporter-like 2 (790 aa).

The chain crosses the membrane as a helical span at residues 47 to 67; sequence PCLFLFVTFLCAWGYVAYYAV. Asn102 and Asn259 each carry an N-linked (GlcNAc...) asparagine glycan. 3 helical membrane passes run 288 to 308, 319 to 339, and 344 to 364; these read IITPYLITIHNITVLLTFQMI, ILVFIACSVLASLILIAMLRW, and LVWISIIGVITALSYGVYYSF. Residue Asn384 is glycosylated (N-linked (GlcNAc...) asparagine). The next 2 membrane-spanning stretches (helical) occupy residues 400–420 and 449–469; these read LWILIALSVILIVLLLVVLVL and LVPWILQAVVIVFSLLVLLFL. The N-linked (GlcNAc...) asparagine glycan is linked to Asn483. 4 helical membrane-spanning segments follow: residues 545–565, 592–612, 691–711, and 728–748; these read VIGFFWCICFVSAFSEMVLAF, VYYHLGTLAFGSLIIAICKII, VTGFLFFLSKLLLASGMAAVT, and FVPAVLVFIGTFIIASIFFSV.

It belongs to the CTL (choline transporter-like) family.

It is found in the membrane. This is Choline transporter-like 2 from Anopheles gambiae (African malaria mosquito).